The following is a 250-amino-acid chain: Probable transcriptional regulatory protein Plut_1643 (250 aa).

The protein belongs to the TACO1 family.

It is found in the cytoplasm. In Chlorobium luteolum (strain DSM 273 / BCRC 81028 / 2530) (Pelodictyon luteolum), this protein is Probable transcriptional regulatory protein Plut_1643.